A 116-amino-acid polypeptide reads, in one-letter code: Fluoride-specific ion channel FluC 1 (116 aa).

4 helical membrane passes run 1–21 (MGKLFLIGAGGFIGACLRYTV), 31–51 (IPAGTLTVNLLGTIVLAFLTF), 58–78 (MVYLVNIGILGSFTTFSTFAY), and 92–112 (FFLNIFLNVALCLVGVSIAYL). Residues Gly68 and Thr71 each contribute to the Na(+) site.

This sequence belongs to the fluoride channel Fluc/FEX (TC 1.A.43) family.

The protein localises to the cell membrane. The catalysed reaction is fluoride(in) = fluoride(out). Its activity is regulated as follows. Na(+) is not transported, but it plays an essential structural role and its presence is essential for fluoride channel function. In terms of biological role, fluoride-specific ion channel. Important for reducing fluoride concentration in the cell, thus reducing its toxicity. In Methanosarcina barkeri (strain Fusaro / DSM 804), this protein is Fluoride-specific ion channel FluC 1.